A 336-amino-acid polypeptide reads, in one-letter code: Anthranilate phosphoribosyltransferase (336 aa).

5-phospho-alpha-D-ribose 1-diphosphate is bound by residues glycine 82, 85–86, threonine 90, 92–95, 110–118, and serine 122; these read GD, NIST, and KHGNRFASG. Glycine 82 contributes to the anthranilate binding site. Serine 94 contributes to the Mg(2+) binding site. Asparagine 113 provides a ligand contact to anthranilate. Anthranilate is bound at residue arginine 168. Residues aspartate 227 and glutamate 228 each contribute to the Mg(2+) site.

It belongs to the anthranilate phosphoribosyltransferase family. In terms of assembly, homodimer. Mg(2+) serves as cofactor.

The enzyme catalyses N-(5-phospho-beta-D-ribosyl)anthranilate + diphosphate = 5-phospho-alpha-D-ribose 1-diphosphate + anthranilate. Its pathway is amino-acid biosynthesis; L-tryptophan biosynthesis; L-tryptophan from chorismate: step 2/5. Functionally, catalyzes the transfer of the phosphoribosyl group of 5-phosphorylribose-1-pyrophosphate (PRPP) to anthranilate to yield N-(5'-phosphoribosyl)-anthranilate (PRA). In Desulfitobacterium hafniense (strain Y51), this protein is Anthranilate phosphoribosyltransferase.